The chain runs to 523 residues: Cytoplasmic dynein 1 light intermediate chain 1 (523 aa).

A disordered region spans residues 1–25 (MAAVGRVGSFGSSPPGLASTYASGP). 74 to 81 (GEDGAGKT) lines the ATP pocket. 3 disordered regions span residues 200 to 219 (PGED…QEDR), 387 to 434 (PPTA…DPNM), and 457 to 523 (GSPG…GEAS). Ser207 bears the Phosphoserine mark. The residue at position 213 (Thr213) is a Phosphothreonine. Phosphoserine is present on residues Ser398 and Ser405. At Thr408 the chain carries Phosphothreonine. A phosphoserine mark is found at Ser412, Ser419, Ser421, and Ser427. Positions 412–421 (SVSSNVASVS) are enriched in low complexity. The segment covering 458–473 (SPGGPGVGGSPGGGAA) has biased composition (gly residues). Positions 474-485 (GASPSLPPSAKK) are enriched in low complexity. Phosphoserine occurs at positions 486 and 510. The segment covering 506–523 (PASVSPTTPTSPTEGEAS) has biased composition (low complexity). Thr512, Thr513, and Thr515 each carry phosphothreonine. Ser516 carries the phosphoserine modification.

This sequence belongs to the dynein light intermediate chain family. Homodimer. The cytoplasmic dynein 1 complex consists of two catalytic heavy chains (HCs) and a number of non-catalytic subunits presented by intermediate chains (ICs), light intermediate chains (LICs) and light chains (LCs); the composition seems to vary in respect to the IC, LIC and LC composition. The heavy chain homodimer serves as a scaffold for the probable homodimeric assembly of the respective non-catalytic subunits. The ICs and LICs bind directly to the HC dimer and the LCs assemble on the IC dimer. Self-associates. Interacts with DYNC1H1; DYNC1LI1 and DYNC1LI2 bind mutually exclusive to DYNC1H1. Interacts with PCNT. Forms a complex with RAB11FIP3 and RAB11A1; the interaction between DYNC1LI1 and RAB11FIP3 is direct and induces DYNC1LI1 localization onto endosomal membrane; the complex regulates endocytic trafficking. Interacts with RUFY3. Phosphorylated during mitosis but not in interphase.

It localises to the cytoplasm. The protein resides in the chromosome. Its subcellular location is the centromere. The protein localises to the kinetochore. It is found in the cytoskeleton. It localises to the spindle pole. The protein resides in the recycling endosome membrane. Functionally, acts as one of several non-catalytic accessory components of the cytoplasmic dynein 1 complex that are thought to be involved in linking dynein to cargos and to adapter proteins that regulate dynein function. Cytoplasmic dynein 1 acts as a motor for the intracellular retrograde motility of vesicles and organelles along microtubules. May play a role in binding dynein to membranous organelles or chromosomes. Probably involved in the microtubule-dependent transport of pericentrin. Is required for progress through the spindle assembly checkpoint. The phosphorylated form appears to be involved in the selective removal of MAD1L1 and MAD1L2 but not BUB1B from kinetochores. Forms a functional Rab11/RAB11FIP3/dynein complex onto endosomal membrane that regulates the movement of peripheral sorting endosomes (SE) along microtubule tracks toward the microtubule organizing center/centrosome, generating the endosomal recycling compartment (ERC). This chain is Cytoplasmic dynein 1 light intermediate chain 1 (Dync1li1), found in Mus musculus (Mouse).